Reading from the N-terminus, the 258-residue chain is Phosphate import ATP-binding protein PstB (258 aa).

Positions 5 to 253 (LDLNDVNIYY…PTKKETEDYI (249 aa)) constitute an ABC transporter domain. 37 to 44 (GPSGCGKS) is a binding site for ATP.

It belongs to the ABC transporter superfamily. Phosphate importer (TC 3.A.1.7) family. The complex is composed of two ATP-binding proteins (PstB), two transmembrane proteins (PstC and PstA) and a solute-binding protein (PstS).

It localises to the cell membrane. The catalysed reaction is phosphate(out) + ATP + H2O = ADP + 2 phosphate(in) + H(+). Part of the ABC transporter complex PstSACB involved in phosphate import. Responsible for energy coupling to the transport system. The polypeptide is Phosphate import ATP-binding protein PstB (Corynebacterium jeikeium (strain K411)).